The following is a 451-amino-acid chain: Probable glycine dehydrogenase (decarboxylating) subunit 1 (451 aa).

The protein belongs to the GcvP family. N-terminal subunit subfamily. The glycine cleavage system is composed of four proteins: P, T, L and H. In this organism, the P 'protein' is a heterodimer of two subunits.

It carries out the reaction N(6)-[(R)-lipoyl]-L-lysyl-[glycine-cleavage complex H protein] + glycine + H(+) = N(6)-[(R)-S(8)-aminomethyldihydrolipoyl]-L-lysyl-[glycine-cleavage complex H protein] + CO2. In terms of biological role, the glycine cleavage system catalyzes the degradation of glycine. The P protein binds the alpha-amino group of glycine through its pyridoxal phosphate cofactor; CO(2) is released and the remaining methylamine moiety is then transferred to the lipoamide cofactor of the H protein. In Thioalkalivibrio sulfidiphilus (strain HL-EbGR7), this protein is Probable glycine dehydrogenase (decarboxylating) subunit 1.